The sequence spans 97 residues: Plastocyanin (97 aa).

The region spanning 1-97 (AEVKLGADDG…AGMKGEVTVT (97 aa)) is the Plastocyanin-like domain. 4 residues coordinate Cu cation: His37, Cys82, His85, and Met90.

This sequence belongs to the plastocyanin family. It depends on Cu(2+) as a cofactor.

It localises to the plastid. The protein resides in the chloroplast thylakoid membrane. Functionally, participates in electron transfer between P700 and the cytochrome b6-f complex in photosystem I. This chain is Plastocyanin (PETE), found in Daucus carota (Wild carrot).